Reading from the N-terminus, the 523-residue chain is GMP synthase [glutamine-hydrolyzing] (523 aa).

The Glutamine amidotransferase type-1 domain occupies 18 to 208 (KILIVDFGGQ…LYNVCGAKGD (191 aa)). Residue cysteine 95 is the Nucleophile of the active site. Residues histidine 182 and glutamate 184 contribute to the active site. Positions 209–398 (WNMKSFLAEA…LGLPDYLVHR (190 aa)) constitute a GMPS ATP-PPase domain. 236 to 242 (SGGVDSS) lines the ATP pocket.

In terms of assembly, homodimer.

The enzyme catalyses XMP + L-glutamine + ATP + H2O = GMP + L-glutamate + AMP + diphosphate + 2 H(+). The protein operates within purine metabolism; GMP biosynthesis; GMP from XMP (L-Gln route): step 1/1. Its function is as follows. Catalyzes the synthesis of GMP from XMP. The polypeptide is GMP synthase [glutamine-hydrolyzing] (Treponema denticola (strain ATCC 35405 / DSM 14222 / CIP 103919 / JCM 8153 / KCTC 15104)).